We begin with the raw amino-acid sequence, 574 residues long: Protein NDNF (574 aa).

The N-terminal stretch at 1–19 (MTWRCGCYGLVLLVLGVMG) is a signal peptide. A disordered region spans residues 97-118 (EDRSGEGSGEPEPLEQQKQQVT). Fibronectin type-III domains lie at 174–329 (PELP…TNMS) and 451–560 (PALP…SGHS). N-linked (GlcNAc...) asparagine glycosylation occurs at asparagine 327.

Its subcellular location is the secreted. In terms of biological role, secretory protein that plays a role in various cellular processes. Acts as a chemorepellent acting on gonadotropin-releasing hormone (GnRH) expressing neurons regulating their migration to the hypothalamus. Also promotes neuron migration, growth and survival as well as neurite outgrowth and is involved in the development of the olfactory system. May also act through the regulation of growth factors activity and downstream signaling. Also regulates extracellular matrix assembly and cell adhesiveness. Promotes endothelial cell survival, vessel formation and plays an important role in the process of revascularization through NOS3-dependent mechanisms. This Danio rerio (Zebrafish) protein is Protein NDNF (ndnf).